The following is a 362-amino-acid chain: UPF0324 membrane protein YPO1307/y2878/YP_1285 (362 aa).

9 helical membrane-spanning segments follow: residues Tyr-21–Val-38, Gly-48–Leu-70, Val-102–Ala-124, Val-139–Leu-161, Val-168–Tyr-190, Met-240–Leu-257, Trp-278–Val-300, Thr-305–Ile-327, and Pro-334–Val-356.

Belongs to the UPF0324 family.

It localises to the cell membrane. In Yersinia pestis, this protein is UPF0324 membrane protein YPO1307/y2878/YP_1285.